A 160-amino-acid chain; its full sequence is Regulatory protein RecX (160 aa).

This sequence belongs to the RecX family.

The protein resides in the cytoplasm. Its function is as follows. Modulates RecA activity. The protein is Regulatory protein RecX of Xanthomonas oryzae pv. oryzae (strain MAFF 311018).